Consider the following 611-residue polypeptide: MNYLPFVLQRRSTVVASAPAPGSASRIPESPTTTGSNIINIIYSQSTHPNSSPTSGSAEKFSWQQSWPSRTSAAPTHDSGTMSINTTFDLSSPSVTSGHALTEQTQVVKEGWLMKRGEHIKNWRQRYFVLHSDGRLMGYRSKPADSASTPSDFLLNNFTVRGCQIMTVDRPKPFTFIIRGLQWTTVIERTFAVESELERQQWTEAIRNVSSRLIDVGEVAMTPSEQTDMTDVDMATIAEDELSEQFSVQGTTCNSSGVKKVTLENFEFLKVLGKGTFGKVILCREKATAKLYAIKILKKEVIIQKDEVAHTLTESRVLKSTNHPFLISLKYSFQTNDRLCFVMQYVNGGELFWHLSHERIFTEDRTRFYGAEIISALGYLHSQGIIYRDLKLENLLLDKDGHIKVADFGLCKEDITYGRTTKTFCGTPEYLAPEVLDDNDYGQAVDWWGTGVVMYEMICGRLPFYNRDHDVLFTLILVEEVKFPRNITDEAKNLLAGLLAKDPKKRLGGGKDDVKEIQAHPFFASINWTDLVLKKIPPPFKPQVTSDTDTRYFDKEFTGESVELTPPDPTGPLGSIAEEPLFPQFSYQGDMASTLGTSSHISTSTSLASMQ.

Residues 14 to 25 are compositionally biased toward low complexity; the sequence is VVASAPAPGSAS. 2 disordered regions span residues 14–33 and 45–88; these read VVAS…SPTT and QSTH…NTTF. Ser30 is modified (phosphoserine). The PH domain maps to 106–211; sequence QVVKEGWLMK…WTEAIRNVSS (106 aa). Residues 266–523 enclose the Protein kinase domain; the sequence is FEFLKVLGKG…VKEIQAHPFF (258 aa). Residues 272–280 and Lys295 contribute to the ATP site; that span reads LGKGTFGKV. Asp389 (proton acceptor) is an active-site residue. The 74-residue stretch at 524–597 folds into the AGC-kinase C-terminal domain; it reads ASINWTDLVL…QGDMASTLGT (74 aa). Position 586 is a phosphoserine (Ser586).

The protein belongs to the protein kinase superfamily. AGC Ser/Thr protein kinase family. RAC subfamily. In terms of assembly, interacts with trbl. Phosphorylated and activated by Pk61C/PDK1. Phosphorylated on Ser-586 by the TORC2 complex. In terms of tissue distribution, ubiquitously expressed. Present in ovary, where it is concentrated at the basal side of follicle cells.

The protein resides in the cytoplasm. It is found in the cytosol. Its subcellular location is the cell membrane. The catalysed reaction is L-seryl-[protein] + ATP = O-phospho-L-seryl-[protein] + ADP + H(+). It catalyses the reaction L-threonyl-[protein] + ATP = O-phospho-L-threonyl-[protein] + ADP + H(+). Serine/threonine kinase involved in various developmental processes. During early embryogenesis, acts as a survival protein. During mid-embryogenesis, phosphorylates and activates trh, a transcription factor required for tracheal cell fate determination. Also regulates tracheal cell migration. Later in development, acts downstream of PI3K and Pk61C/PDK1 in the insulin receptor transduction pathway which regulates cell growth and organ size, by phosphorylating and antagonizing FOXO transcription factor. Controls follicle cell size during oogenesis. May also stimulate cell growth by phosphorylating Gig/Tsc2 and inactivating the Tsc complex. Dephosphorylation of 'Ser-586' by Phlpp triggers apoptosis and suppression of tumor growth. The sequence is that of RAC serine/threonine-protein kinase from Drosophila melanogaster (Fruit fly).